The sequence spans 121 residues: Putative iron-sulfur cluster insertion protein ErpA (121 aa).

Iron-sulfur cluster-binding residues include cysteine 49, cysteine 113, and cysteine 115.

It belongs to the HesB/IscA family. As to quaternary structure, homodimer. It depends on iron-sulfur cluster as a cofactor.

Functionally, required for insertion of 4Fe-4S clusters. This Polaromonas sp. (strain JS666 / ATCC BAA-500) protein is Putative iron-sulfur cluster insertion protein ErpA.